We begin with the raw amino-acid sequence, 219 residues long: Interleukin-12 subunit alpha (219 aa).

Residues 1–22 (MCPARSLLLVATLVLLDYLSLA) form the signal peptide. 2 N-linked (GlcNAc...) asparagine glycosylation sites follow: N24 and N93. Intrachain disulfides connect C37–C110, C64–C196, and C85–C123.

Belongs to the IL-6 superfamily. In terms of assembly, heterodimer with IL12B; disulfide-linked. This heterodimer is known as interleukin IL-12. Heterodimer with EBI3/IL27B; not disulfide-linked. This heterodimer is known as interleukin IL-35. Interacts with NBR1; this interaction promotes IL-12 secretion.

It is found in the secreted. Its function is as follows. Heterodimerizes with IL12B to form the IL-12 cytokine or with EBI3/IL27B to form the IL-35 cytokine. IL-12 is primarily produced by professional antigen-presenting cells (APCs) such as B-cells and dendritic cells (DCs) as well as macrophages and granulocytes and regulates T-cell and natural killer-cell responses, induces the production of interferon-gamma (IFN-gamma), favors the differentiation of T-helper 1 (Th1) cells and is an important link between innate resistance and adaptive immunity. Mechanistically, exerts its biological effects through a receptor composed of IL12R1 and IL12R2 subunits. Binding to the receptor results in the rapid tyrosine phosphorylation of a number of cellular substrates including the JAK family kinases TYK2 and JAK2. In turn, recruited STAT4 gets phosphorylated and translocates to the nucleus where it regulates cytokine/growth factor responsive genes. As part of IL-35, plays essential roles in maintaining the immune homeostasis of the liver microenvironment and also functions as an immune-suppressive cytokine. Mediates biological events through unconventional receptors composed of IL12RB2 and gp130/IL6ST heterodimers or homodimers. Signaling requires the transcription factors STAT1 and STAT4, which form a unique heterodimer that binds to distinct DNA sites. This Papio anubis (Olive baboon) protein is Interleukin-12 subunit alpha (IL12A).